The sequence spans 429 residues: MKLQKPKGTQDILPAESAKWQYVEGFAREIFKRYNYAEVRTPIFEHYEVISRSVGDTTDIVTKEMYDFYDKGDRHITLRPEGTAPVVRAYVENKLFAPEVQKPSKFYYMGPMFRYERPQAGRLRQFHQIGVECFGSSNPATDVETIVMAAHFLKEIGIQGVKLHLNTLGNPESRAAYRQALIDYLTPLKETLSKDSQRRLEENPLRVLDSKEKEDKVAVENAPSILDFLDEESQTHFDAVSQMLENLGVDYIIDTNMVRGLDYYNHTIFEFITEIEGNDLTVCAGGRYDGLVAYFGGPETAGFGFGLGVERLLLILEKQGVALPIENALDVYIAVLGDGANVKALELVQALRQQGFKAERDYLNRKLKAQFKSADVFAAKTLITLGESEVESRQVTVKNNQTREEVQVSLETISQNFSEIFEKLGFYTQ.

It belongs to the class-II aminoacyl-tRNA synthetase family. As to quaternary structure, homodimer.

It is found in the cytoplasm. The catalysed reaction is tRNA(His) + L-histidine + ATP = L-histidyl-tRNA(His) + AMP + diphosphate + H(+). In Streptococcus pneumoniae (strain P1031), this protein is Histidine--tRNA ligase.